We begin with the raw amino-acid sequence, 305 residues long: UDP-3-O-acyl-N-acetylglucosamine deacetylase (305 aa).

Residues His-78, His-237, and Asp-241 each coordinate Zn(2+). His-264 acts as the Proton donor in catalysis.

Belongs to the LpxC family. Zn(2+) is required as a cofactor.

The catalysed reaction is a UDP-3-O-[(3R)-3-hydroxyacyl]-N-acetyl-alpha-D-glucosamine + H2O = a UDP-3-O-[(3R)-3-hydroxyacyl]-alpha-D-glucosamine + acetate. Its pathway is glycolipid biosynthesis; lipid IV(A) biosynthesis; lipid IV(A) from (3R)-3-hydroxytetradecanoyl-[acyl-carrier-protein] and UDP-N-acetyl-alpha-D-glucosamine: step 2/6. Catalyzes the hydrolysis of UDP-3-O-myristoyl-N-acetylglucosamine to form UDP-3-O-myristoylglucosamine and acetate, the committed step in lipid A biosynthesis. In Paraburkholderia xenovorans (strain LB400), this protein is UDP-3-O-acyl-N-acetylglucosamine deacetylase.